A 507-amino-acid polypeptide reads, in one-letter code: Maturase K (507 aa).

This sequence belongs to the intron maturase 2 family. MatK subfamily.

Its subcellular location is the plastid. The protein resides in the chloroplast. In terms of biological role, usually encoded in the trnK tRNA gene intron. Probably assists in splicing its own and other chloroplast group II introns. The chain is Maturase K from Liriodendron chinense (Chinese tulip tree).